The following is a 116-amino-acid chain: MRHRRRTPHLNKPADQRKALMRALTTALLREGRITTTKARAKAIRATTEKMITLAKEGSLAARRQALAYIYDKELVRSLFEQAPERYRDRPGGYTRILRTVHRRGDGAEMAVIELV.

The protein belongs to the bacterial ribosomal protein bL17 family. In terms of assembly, part of the 50S ribosomal subunit. Contacts protein L32.

The sequence is that of Large ribosomal subunit protein bL17 from Synechococcus sp. (strain JA-2-3B'a(2-13)) (Cyanobacteria bacterium Yellowstone B-Prime).